Consider the following 637-residue polypeptide: MNDWSIDDARAGYNVTHWSQGFYGISDHGEVTVSPDPKNPDYKIGLNELAKDMVKAGVALPVLVRFPQILHHRVNSLCQAFDQAIQKYEYQADYLLVYPIKVNQQQTVVEEILASQASKEVPQLGLEAGSKPELMAVLAMAQKASSVIVCNGYKDNEYIRLALIGEKLGHKVYIVLEKLSELKMVLAESKRLGVTPRLGLRARLAFQGKGKWQASGGEKSKFGLSAAQILLVVEQLKQNDMLDSLQLLHFHLGSQIANIRDIRQGVSEAGRFYCELRALGASVNCFDVGGGLAVDYDGTRSQSNNSMNYGLTEYANNIVNVLTDICNEYEQPMPRIISESGRYLTAHHAVLITDVIGTEAYQPEDIQPPAEESPQLLHNMWHSWSELSGRADQRALIEIYHDSQSDLQEAHSLFALGQLSLAERAWAEQANLRVCHEVQGLLSAKNRYHRPIIDELNEKLADKFFVNFSLFQSLPDAWGIDQVFPVLPLSGLDKAPERRAVMLDITCDSDGIVDQYVDGQGIETTLPVPAWSADSPYLIGFFLVGAYQEILGDMHNLFGDTNSAVVRIEDNGVTNIESVLAGDTVADVLRYVNLDAVAFMRTYEELVNLHIAEDERAQILEELQVGLKGYTYLEDFS.

Lys101 bears the N6-(pyridoxal phosphate)lysine mark. Phe286 to Tyr296 is a binding site for substrate.

This sequence belongs to the Orn/Lys/Arg decarboxylase class-II family. SpeA subfamily. Mg(2+) serves as cofactor. It depends on pyridoxal 5'-phosphate as a cofactor.

The catalysed reaction is L-arginine + H(+) = agmatine + CO2. The protein operates within amine and polyamine biosynthesis; agmatine biosynthesis; agmatine from L-arginine: step 1/1. Its function is as follows. Catalyzes the biosynthesis of agmatine from arginine. This is Biosynthetic arginine decarboxylase from Shewanella baltica (strain OS223).